Consider the following 140-residue polypeptide: Large ribosomal subunit protein uL11 (140 aa).

The protein belongs to the universal ribosomal protein uL11 family. In terms of assembly, part of the ribosomal stalk of the 50S ribosomal subunit. Interacts with L10 and the large rRNA to form the base of the stalk. L10 forms an elongated spine to which L12 dimers bind in a sequential fashion forming a multimeric L10(L12)X complex. In terms of processing, one or more lysine residues are methylated.

Its function is as follows. Forms part of the ribosomal stalk which helps the ribosome interact with GTP-bound translation factors. The protein is Large ribosomal subunit protein uL11 of Oleidesulfovibrio alaskensis (strain ATCC BAA-1058 / DSM 17464 / G20) (Desulfovibrio alaskensis).